We begin with the raw amino-acid sequence, 459 residues long: MKKLWGGRFTKTAEEWVDEFGASIPFDQELVEEDIEGSLAHVTMLGECGILPEGDVEQIKGGLIRLLEKAKQGELKFSIAYEDIHLNIEKMLIDDIGPVGGKLHTGRSRNDQVATDMHLYLRKRVEEILGLIRGMQRALVAQAEKHVETIMPGYTHLQRAQPISFAHHLLAYFWMLERDYERFSESQKRINRSPLGAGALAGTTFPIDRHRTAELLGFADIYENSLDAVSDRDFIIEFLSNSSMLMMHLSRLAEELILWSSQEFQFIELDDAFATGSSIMPQKKNPDMAELIRGKTGRVYGHLMALLTVMKGLPLAYNKDMQEDKEGMFDTVKTVIGSLKIFTGMIETMNVRTDVMERATKQDFSNATELADYLAAKGVPFREAHEIVGKLVLHCIEQGVFLADLPLDVYKEASPLFEEDIYDALHPRTAVNRRNSAGGTGFAEVRAALAKAKQLLSTP.

The protein belongs to the lyase 1 family. Argininosuccinate lyase subfamily.

It localises to the cytoplasm. It catalyses the reaction 2-(N(omega)-L-arginino)succinate = fumarate + L-arginine. The protein operates within amino-acid biosynthesis; L-arginine biosynthesis; L-arginine from L-ornithine and carbamoyl phosphate: step 3/3. This Geobacillus kaustophilus (strain HTA426) protein is Argininosuccinate lyase.